The primary structure comprises 567 residues: Geranylgeranyl transferase type-2 subunit alpha (567 aa).

PFTA repeat units lie at residues 44–78 (LDES…HLET), 88–122 (LVKA…RLPE), 124–158 (NWAR…QAAV), 159–193 (APAE…QLHP), 207–241 (VLLK…RAEP), and 363–397 (VLQS…ALDP). A Phosphoserine modification is found at serine 98. LRR repeat units follow at residues 442–463 (DVRV…EQLL), 464–486 (LVTH…AALR), 487–508 (CLEV…ANLP), 509–530 (RLQE…QPLV), and 534–555 (RLVL…QERL).

The protein belongs to the protein prenyltransferase subunit alpha family. Heterotrimer composed of RABGGTA, RABGGTB and CHM; within this trimer, RABGGTA and RABGGTB form the catalytic component B, while CHM (component A) mediates peptide substrate binding. The Rab GGTase dimer (RGGT) interacts with CHM (component A) prior to Rab protein binding; the association is stabilized by geranylgeranyl pyrophosphate (GGpp). The CHM:RGGT:Rab complex is destabilized by GGpp. Interacts with non-phosphorylated form of RAB8A; phosphorylation of RAB8A at 'Thr-72' disrupts this interaction. As to expression, most abundant in the heart, brain, spleen and liver. Less in the lung, muscle, kidney and testis; in these tissues less abundant than the beta subunit.

It catalyses the reaction geranylgeranyl diphosphate + L-cysteinyl-[protein] = S-geranylgeranyl-L-cysteinyl-[protein] + diphosphate. The enzymatic reaction requires the aid of a Rab escort protein (also called component A), such as CHM. Catalyzes the transfer of a geranylgeranyl moiety from geranylgeranyl diphosphate to both cysteines of Rab proteins with the C-terminal sequence -XXCC, -XCXC and -CCXX, such as RAB1A, RAB3A, RAB5A and RAB7A. The polypeptide is Geranylgeranyl transferase type-2 subunit alpha (Rabggta) (Rattus norvegicus (Rat)).